Reading from the N-terminus, the 28-residue chain is Ranatuerin-2LT (28 aa).

Cys23 and Cys28 are disulfide-bonded.

In terms of tissue distribution, expressed by the skin glands.

The protein resides in the secreted. Has antibacterial activity. In Rana latastei (Italian agile frog), this protein is Ranatuerin-2LT.